The chain runs to 77 residues: uncharacterized protein (77 aa).

4Fe-4S ferredoxin-type domains lie at 3–32 (VEII…WTKD) and 36–65 (KYYA…IKVV). [4Fe-4S] cluster contacts are provided by Cys-12, Cys-15, Cys-18, Cys-22, Cys-45, Cys-48, Cys-51, and Cys-55.

Requires [4Fe-4S] cluster as cofactor.

Its function is as follows. Ferredoxins are iron-sulfur proteins that transfer electrons probably in the CO-dehydrogenase complex. This is an uncharacterized protein from Methanocaldococcus jannaschii (strain ATCC 43067 / DSM 2661 / JAL-1 / JCM 10045 / NBRC 100440) (Methanococcus jannaschii).